A 729-amino-acid chain; its full sequence is Phosphoribosylformylglycinamidine synthase subunit PurL (729 aa).

The active site involves His-54. The ATP site is built by Tyr-57 and Lys-96. Glu-98 contributes to the Mg(2+) binding site. Substrate contacts are provided by residues 99–102 (SHNH) and Arg-121. The active-site Proton acceptor is His-100. Asp-122 is a Mg(2+) binding site. A substrate-binding site is contributed by Gln-245. Asp-273 lines the Mg(2+) pocket. 317–319 (ETQ) contacts substrate. Residues Asp-495 and Gly-532 each coordinate ATP. Position 533 (Asn-533) interacts with Mg(2+). Ser-535 is a substrate binding site.

This sequence belongs to the FGAMS family. Monomer. Part of the FGAM synthase complex composed of 1 PurL, 1 PurQ and 2 PurS subunits.

It is found in the cytoplasm. The catalysed reaction is N(2)-formyl-N(1)-(5-phospho-beta-D-ribosyl)glycinamide + L-glutamine + ATP + H2O = 2-formamido-N(1)-(5-O-phospho-beta-D-ribosyl)acetamidine + L-glutamate + ADP + phosphate + H(+). It functions in the pathway purine metabolism; IMP biosynthesis via de novo pathway; 5-amino-1-(5-phospho-D-ribosyl)imidazole from N(2)-formyl-N(1)-(5-phospho-D-ribosyl)glycinamide: step 1/2. Functionally, part of the phosphoribosylformylglycinamidine synthase complex involved in the purines biosynthetic pathway. Catalyzes the ATP-dependent conversion of formylglycinamide ribonucleotide (FGAR) and glutamine to yield formylglycinamidine ribonucleotide (FGAM) and glutamate. The FGAM synthase complex is composed of three subunits. PurQ produces an ammonia molecule by converting glutamine to glutamate. PurL transfers the ammonia molecule to FGAR to form FGAM in an ATP-dependent manner. PurS interacts with PurQ and PurL and is thought to assist in the transfer of the ammonia molecule from PurQ to PurL. In Staphylococcus carnosus (strain TM300), this protein is Phosphoribosylformylglycinamidine synthase subunit PurL.